Reading from the N-terminus, the 341-residue chain is Heat-inducible transcription repressor HrcA (341 aa).

It belongs to the HrcA family.

Functionally, negative regulator of class I heat shock genes (grpE-dnaK-dnaJ and groELS operons). Prevents heat-shock induction of these operons. This Carboxydothermus hydrogenoformans (strain ATCC BAA-161 / DSM 6008 / Z-2901) protein is Heat-inducible transcription repressor HrcA.